A 257-amino-acid polypeptide reads, in one-letter code: uncharacterized protein (257 aa).

Aspartate 34, aspartate 60, valine 61, asparagine 87, tyrosine 152, and lysine 156 together coordinate NAD(+). Catalysis depends on tyrosine 152, which acts as the Proton acceptor.

Belongs to the short-chain dehydrogenases/reductases (SDR) family.

This is an uncharacterized protein from Bacillus subtilis (strain 168).